Reading from the N-terminus, the 762-residue chain is Primary amine oxidase, liver isozyme (762 aa).

Positions 1–16 (MFIFIFLSLWTLLVMG) are cleaved as a signal peptide. Residues 23 to 54 (GSEEGVGKQCHPSLPPRCPSRSPSDQPWTHPD) are disordered. An N-linked (GlcNAc...) asparagine glycan is attached at N136. A disulfide bridge connects residues C197 and C198. N231 is a glycosylation site (N-linked (GlcNAc...) asparagine). 383 to 393 (YMDSGFGMGYF) contributes to the substrate binding site. The active-site Proton acceptor is D385. C403 and C429 are joined by a disulfide. 467 to 472 (MLNYDY) contacts substrate. Residue Y470 is the Schiff-base intermediate with substrate; via topaquinone of the active site. Y470 bears the 2',4',5'-topaquinone mark. Cu cation is bound by residues H519 and H521. Residues D528, L529, D530, E571, F662, and N664 each contribute to the Ca(2+) site. N665 is a glycosylation site (N-linked (GlcNAc...) asparagine). E666, D672, and L673 together coordinate Ca(2+). H683 provides a ligand contact to Cu cation. A disulfide bond links C733 and C740.

The protein belongs to the copper/topaquinone oxidase family. Homodimer; disulfide-linked. The cofactor is Cu cation. Ca(2+) serves as cofactor. It depends on L-topaquinone as a cofactor. Post-translationally, topaquinone (TPQ) is generated by copper-dependent autoxidation of a specific tyrosyl residue. As to expression, liver.

It localises to the secreted. It is found in the extracellular space. It catalyses the reaction a primary methyl amine + O2 + H2O = an aldehyde + H2O2 + NH4(+). The sequence is that of Primary amine oxidase, liver isozyme from Bos taurus (Bovine).